Reading from the N-terminus, the 945-residue chain is Glutamyl aminopeptidase (945 aa).

The Cytoplasmic segment spans residues 1–18 (MNFAEEEPSKKYCIKGKH). A helical; Signal-anchor for type II membrane protein membrane pass occupies residues 19 to 39 (VAIICATVVAVGLIVGLSVGL). Residues 40–945 (TRSCEPGTTP…SISEWFTSMP (906 aa)) lie on the Extracellular side of the membrane. A disordered region spans residues 45–77 (PGTTPAPSNPPPHTSTALPPQDQNVCPDSDDES). 2 N-linked (GlcNAc...) asparagine glycosylation sites follow: N116 and N189. E215 is a substrate binding site. 2 N-linked (GlcNAc...) asparagine glycosylation sites follow: N236 and N316. 349–353 (GAMEN) serves as a coordination point for substrate. H385 serves as a coordination point for Zn(2+). Catalysis depends on E386, which acts as the Proton acceptor. Residues H389 and E408 each contribute to the Zn(2+) site. Residues N546, N584, N601, N640, N669, N754, N766, and N792 are each glycosylated (N-linked (GlcNAc...) asparagine). Residue R878 coordinates substrate.

The protein belongs to the peptidase M1 family. As to quaternary structure, homodimer; disulfide-linked. Zn(2+) serves as cofactor. As to expression, highest expression in kidney proximal tubules and ileum enterocytes. High expression also detected in liver and pituitary. Lower levels in heart, adrenal gland and brain. Not detected in aorta, lung or spleen. In heart, higher levels in ventricle than in atrium. Also expressed in glomerular mesangial cells.

The protein resides in the cell membrane. The catalysed reaction is Release of N-terminal glutamate (and to a lesser extent aspartate) from a peptide.. Substrate specificity is modulated by calcium which enhances the enzymatic activity for cleavage of acidic residues while reducing its activity with basic residues. Inhibited by aminopeptidase inhibitors amastatin and bestatin. Functionally, regulates central hypertension through its calcium-modulated preference to cleave N-terminal acidic residues from peptides such as angiotensin II. This Rattus norvegicus (Rat) protein is Glutamyl aminopeptidase (Enpep).